We begin with the raw amino-acid sequence, 85 residues long: Small ribosomal subunit protein uS17 (85 aa).

This sequence belongs to the universal ribosomal protein uS17 family. In terms of assembly, part of the 30S ribosomal subunit.

Its function is as follows. One of the primary rRNA binding proteins, it binds specifically to the 5'-end of 16S ribosomal RNA. This chain is Small ribosomal subunit protein uS17, found in Lachnospira eligens (strain ATCC 27750 / DSM 3376 / VPI C15-48 / C15-B4) (Eubacterium eligens).